Consider the following 87-residue polypeptide: Phosphoribosyl-ATP pyrophosphatase (87 aa).

It belongs to the PRA-PH family.

Its subcellular location is the cytoplasm. It carries out the reaction 1-(5-phospho-beta-D-ribosyl)-ATP + H2O = 1-(5-phospho-beta-D-ribosyl)-5'-AMP + diphosphate + H(+). It participates in amino-acid biosynthesis; L-histidine biosynthesis; L-histidine from 5-phospho-alpha-D-ribose 1-diphosphate: step 2/9. The chain is Phosphoribosyl-ATP pyrophosphatase from Paenarthrobacter aurescens (strain TC1).